The primary structure comprises 1123 residues: Polyprotein of EF-Ts, chloroplastic (1123 aa).

The N-terminal 73 residues, 1-73 (MTPVVHCSVG…SSARRPRTLS (73 aa)), are a transit peptide targeting the chloroplast. Residues 68 to 141 (RPRTLSAATV…MPPLNDEDLV (74 aa)) form a disordered region. The span at 94–103 (TSEESSEDTA) shows a compositional bias: acidic residues. The span at 106–119 (TAEASEQAEASTSS) shows a compositional bias: low complexity. Residues 143-212 (GASFTGKVRS…ETGRISLTMR (70 aa)) enclose the S1 motif 1 domain. Residues 213–258 (TGGDYVKPKTETPKAASGGRNTTATTSRGSPRQTRERDEAKSMGET) form a disordered region. Positions 231-244 (GRNTTATTSRGSPR) are enriched in polar residues. Positions 245–254 (QTRERDEAKS) are enriched in basic and acidic residues. Residues 263–331 (GQFLDGVVKN…VRGQVTLTMK (69 aa)) form the S1 motif 2 domain. Disordered regions lie at residues 443 to 670 (KTES…SEKT) and 894 to 923 (VAAQ…EEKK). Over residues 486–501 (EGSVTTEPTEAASTEF) the composition is skewed to polar residues. Positions 551–587 (SVASTESVTAVVEESAPVSSVAIEVPAPEASEASAQE) are enriched in low complexity. Over residues 630–639 (KPDEPEESLI) the composition is skewed to acidic residues. 2 stretches are compositionally biased toward low complexity: residues 657-670 (AAVP…SEKT) and 894-903 (VAAQTAAKAP). Basic and acidic residues predominate over residues 908 to 923 (PKDDKPEETAETEEKK).

Belongs to the EF-Ts family. Component of the chloroplast ribosome 30S and 70S subunits, as well as polysomes. In terms of assembly, component of the chloroplast ribosome 70S subunit, and at low levels, present in polysomes. As to quaternary structure, associates transiently with chloroplast polysomes.

The protein resides in the plastid. It is found in the chloroplast. Associates with the EF-Tu.GDP complex and induces the exchange of GDP to GTP. It remains bound to the aminoacyl-tRNA.EF-Tu.GTP complex up to the GTP hydrolysis stage on the ribosome. In terms of biological role, binds to psbD and psbA 5'-untranslated regions (UTRs) in vitro. In Oryza sativa subsp. indica (Rice), this protein is Polyprotein of EF-Ts, chloroplastic.